We begin with the raw amino-acid sequence, 497 residues long: L-amino-acid oxidase BjussuLAAO-I (497 aa).

Residues 1–13 form the signal peptide; that stretch reads MNVFFMFSKPGKL. Residues Cys-23 and Cys-186 are joined by a disulfide bond. FAD is bound by residues 56–57, 76–77, 76–80, Gln-84, and 100–103; these read MS, EA, EASER, and GPMR. A substrate-binding site is contributed by Arg-103. A glycan (N-linked (GlcNAc...) asparagine) is linked at Asn-185. Position 236 (His-236) interacts with substrate. Val-274 contributes to the FAD binding site. Cysteines 344 and 425 form a disulfide. Tyr-385 is a binding site for substrate. FAD is bound by residues Glu-470, 477 to 482, and 478 to 482; these read GWIAST and WIAST. 477–478 serves as a coordination point for substrate; that stretch reads GW.

It belongs to the flavin monoamine oxidase family. FIG1 subfamily. In terms of assembly, homodimer; non-covalently linked. It depends on FAD as a cofactor. In terms of tissue distribution, expressed by the venom gland.

Its subcellular location is the secreted. It carries out the reaction an L-alpha-amino acid + O2 + H2O = a 2-oxocarboxylate + H2O2 + NH4(+). The enzyme catalyses L-leucine + O2 + H2O = 4-methyl-2-oxopentanoate + H2O2 + NH4(+). It catalyses the reaction L-phenylalanine + O2 + H2O = 3-phenylpyruvate + H2O2 + NH4(+). The catalysed reaction is L-tryptophan + O2 + H2O = indole-3-pyruvate + H2O2 + NH4(+). It carries out the reaction L-methionine + O2 + H2O = 4-methylsulfanyl-2-oxobutanoate + H2O2 + NH4(+). The enzyme catalyses L-isoleucine + O2 + H2O = (S)-3-methyl-2-oxopentanoate + H2O2 + NH4(+). It catalyses the reaction L-tyrosine + O2 + H2O = 3-(4-hydroxyphenyl)pyruvate + H2O2 + NH4(+). The catalysed reaction is L-cysteine + O2 + H2O = 2-oxo-3-sulfanylpropanoate + H2O2 + NH4(+). In terms of biological role, catalyzes an oxidative deamination of predominantly hydrophobic and aromatic L-amino acids, thus producing hydrogen peroxide that may contribute to the diverse toxic effects of this enzyme. Shows high specificity for L-Met, L-Leu, L-Phe, L-Tyr, L-Ile, L-Trp, a moderate activity on L-Cys and low activity on L-Val, L-Lys, L-Arg, L-His, L-Gln, L-Thr and L-Ser. Exhibits diverse biological activities, such as hemorrhage, hemolysis, edema, apoptosis of vascular endothelial cells or tumor cell lines, and antibacterial, as well as regulation of platelet aggregation. Effects of snake L-amino oxidases on platelets are controversial, since they either induce aggregation or inhibit agonist-induced aggregation. These different effects are probably due to different experimental conditions. In vitro, shows parasiticidal activities against both trypanosomes and leishmania, as a result of enzyme-catalyzed hydrogen peroxide production. In Bothrops jararacussu (Jararacussu), this protein is L-amino-acid oxidase BjussuLAAO-I.